Consider the following 472-residue polypeptide: Sodium-coupled neutral amino acid transporter 5 (472 aa).

At Met-1 the chain carries N-acetylmethionine. At 1 to 48 the chain is on the cytoplasmic side; the sequence is MELQDPKMNGALPSDAVGYRQEREGFLPSRGPAPGSKPVQFMDFEGKT. A helical transmembrane segment spans residues 49–71; the sequence is SFGMSVFNLSNAIMGSGILGLAY. Topologically, residues 72-87 are extracellular; that stretch reads AMAHTGVIFFLALLLC. Residues 88–108 traverse the membrane as a helical segment; sequence IALLSSYSIHLLLTCAGIAGI. The Cytoplasmic segment spans residues 109–125; that stretch reads RAYEQLGQRAFGPAGKV. The chain crosses the membrane as a helical span at residues 126 to 146; that stretch reads VVATVICLHNVGAMSSYLFII. Residues 147–166 are Extracellular-facing; that stretch reads KSELPLVIGTFLYMDPEGDW. A helical membrane pass occupies residues 167 to 187; sequence FLKGNLLIIIVSVLIILPLAL. Over 188–192 the chain is Cytoplasmic; it reads MKHLG. The helical transmembrane segment at 193–213 threads the bilayer; that stretch reads YLGYTSGLSLTCMLFFLVSVI. Over 214 to 257 the chain is Extracellular; sequence YKKFQLGCAIGHNETAMESEALVGLPSQGLNSSCEAQMFTVDSQ. A disulfide bond links Cys-221 and Cys-247. N-linked (GlcNAc...) asparagine glycosylation is present at Asn-226. The helical transmembrane segment at 258 to 278 threads the bilayer; it reads MSYTVPIMAFAFVCHPEVLPI. The Cytoplasmic segment spans residues 279 to 295; that stretch reads YTELCRPSKRRMQAVAN. The helical transmembrane segment at 296-316 threads the bilayer; it reads VSIGAMFCMYGLTATFGYLTF. Residues 317-334 lie on the Extracellular side of the membrane; sequence YSSVKAEMLHMYSQKDPL. A helical transmembrane segment spans residues 335–355; that stretch reads ILCVRLAVLLAVTLTVPVVLF. At 356 to 376 the chain is on the cytoplasmic side; the sequence is PIRRALQQLLFPGKAFSWPRH. Residues 377 to 397 form a helical membrane-spanning segment; it reads VAIALILLVLVNVLVICVPTI. At 398 to 399 the chain is on the extracellular side; sequence RD. The helical transmembrane segment at 400–420 threads the bilayer; that stretch reads IFGVIGSTSAPSLIFILPSIF. The Cytoplasmic segment spans residues 421 to 439; it reads YLRIVPSEVEPFLSWPKIQ. Residues 440–460 form a helical membrane-spanning segment; sequence ALCFGVLGVLFMAVSLGFMFA. Topologically, residues 461–472 are extracellular; it reads NWATGQSRMSGH.

This sequence belongs to the amino acid/polyamine transporter 2 family. Predominantly expressed in stomach, brain, liver, lung and intestinal tract.

Its subcellular location is the cell membrane. It carries out the reaction L-serine(out) + Na(+)(out) + H(+)(in) = L-serine(in) + Na(+)(in) + H(+)(out). The catalysed reaction is L-alanine(out) + Na(+)(out) + H(+)(in) = L-alanine(in) + Na(+)(in) + H(+)(out). It catalyses the reaction glycine(out) + Na(+)(out) + H(+)(in) = glycine(in) + Na(+)(in) + H(+)(out). The enzyme catalyses L-glutamine(out) + Na(+)(out) + H(+)(in) = L-glutamine(in) + Na(+)(in) + H(+)(out). It carries out the reaction L-asparagine(out) + Na(+)(out) + H(+)(in) = L-asparagine(in) + Na(+)(in) + H(+)(out). The catalysed reaction is L-histidine(out) + Na(+)(out) + H(+)(in) = L-histidine(in) + Na(+)(in) + H(+)(out). It catalyses the reaction L-cysteine(out) + Na(+)(out) + H(+)(in) = L-cysteine(in) + Na(+)(in) + H(+)(out). With respect to regulation, not inhibited by lithium. Partial allosteric regulation on ions sodium binding. Symporter that cotransports neutral amino acids and sodium ions, coupled to an H(+) antiporter activity. Releases L-glutamine and glycine from astroglial cells and may participate in the glutamate/GABA-L-glutamine cycle and the NMDA receptors activation. In addition, contributes significantly to L-glutamine uptake in retina, namely in ganglion and Mueller cells therefore, participates in the retinal glutamate-glutamine cycle. The transport activity is pH sensitive and Li(+) tolerant. Moreover functions in both direction and is associated with large uncoupled fluxes of protons. The transport is electroneutral coupled to the cotransport of 1 Na(+) and the antiport of 1 H(+). May have a particular importance for modulation of net hepatic glutamine flux. This chain is Sodium-coupled neutral amino acid transporter 5 (SLC38A5), found in Homo sapiens (Human).